A 681-amino-acid polypeptide reads, in one-letter code: Potassium-transporting ATPase ATP-binding subunit (681 aa).

4 helical membrane passes run 30-50, 59-79, 216-236, and 255-275; these read LLVY…FFGI, LAIA…EAIA, ILLV…LPFT, and IALL…SIGI. The active-site 4-aspartylphosphate intermediate is the Asp306. ATP is bound by residues Asp343, Glu347, 376-383, and Lys394; that span reads FTATTRMS. Mg(2+) contacts are provided by Asp517 and Asp521. The next 3 membrane-spanning stretches (helical) occupy residues 587 to 607, 615 to 635, and 661 to 681; these read FAII…LNLM, AILS…PLSL, and LIAP…LGIV.

This sequence belongs to the cation transport ATPase (P-type) (TC 3.A.3) family. Type IA subfamily. The system is composed of three essential subunits: KdpA, KdpB and KdpC.

The protein localises to the cell membrane. It carries out the reaction K(+)(out) + ATP + H2O = K(+)(in) + ADP + phosphate + H(+). Functionally, part of the high-affinity ATP-driven potassium transport (or Kdp) system, which catalyzes the hydrolysis of ATP coupled with the electrogenic transport of potassium into the cytoplasm. This subunit is responsible for energy coupling to the transport system and for the release of the potassium ions to the cytoplasm. The sequence is that of Potassium-transporting ATPase ATP-binding subunit from Listeria monocytogenes serovar 1/2a (strain ATCC BAA-679 / EGD-e).